Here is a 302-residue protein sequence, read N- to C-terminus: N-acetylmuramic acid 6-phosphate etherase (302 aa).

The 164-residue stretch at 58-221 folds into the SIS domain; it reads IGESFLNGGR…STGAMVKTGK (164 aa). Glu-86 acts as the Proton donor in catalysis. Glu-117 is a catalytic residue.

The protein belongs to the GCKR-like family. MurNAc-6-P etherase subfamily. In terms of assembly, homodimer.

The enzyme catalyses N-acetyl-D-muramate 6-phosphate + H2O = N-acetyl-D-glucosamine 6-phosphate + (R)-lactate. It participates in amino-sugar metabolism; N-acetylmuramate degradation. Functionally, specifically catalyzes the cleavage of the D-lactyl ether substituent of MurNAc 6-phosphate, producing GlcNAc 6-phosphate and D-lactate. This Clostridium botulinum (strain Okra / Type B1) protein is N-acetylmuramic acid 6-phosphate etherase.